A 476-amino-acid polypeptide reads, in one-letter code: ATP synthase subunit beta (476 aa).

154–161 (GGAGVGKT) lines the ATP pocket.

The protein belongs to the ATPase alpha/beta chains family. As to quaternary structure, F-type ATPases have 2 components, CF(1) - the catalytic core - and CF(0) - the membrane proton channel. CF(1) has five subunits: alpha(3), beta(3), gamma(1), delta(1), epsilon(1). CF(0) has four main subunits: a(1), b(1), b'(1) and c(9-12).

The protein localises to the cell inner membrane. The catalysed reaction is ATP + H2O + 4 H(+)(in) = ADP + phosphate + 5 H(+)(out). Its function is as follows. Produces ATP from ADP in the presence of a proton gradient across the membrane. The catalytic sites are hosted primarily by the beta subunits. This chain is ATP synthase subunit beta, found in Rhodopseudomonas palustris (strain HaA2).